We begin with the raw amino-acid sequence, 477 residues long: Erythritol/L-threitol-binding protein (477 aa).

Residues 1–38 constitute a signal peptide (tat-type signal); the sequence is MMSRESQPGLHRQLSRRNMLAAMGLAGAAAVSLPVLSA.

Belongs to the bacterial solute-binding protein 1 family. Predicted to be exported by the Tat system. The position of the signal peptide cleavage has not been experimentally proven.

Part of an ABC transporter complex involved in erythritol/L-threitol import. Binds erythritol and L-threitol. Functions in the transport for the degradation pathways of erythritol and L-threitol, that allow M.smegmatis to grow on these compounds as the sole carbon source. In Mycolicibacterium smegmatis (strain ATCC 700084 / mc(2)155) (Mycobacterium smegmatis), this protein is Erythritol/L-threitol-binding protein.